The following is a 296-amino-acid chain: Ribosomal RNA small subunit methyltransferase H (296 aa).

Residues 41-43 (GGY), Asp59, Phe86, Asp104, and Gln111 each bind S-adenosyl-L-methionine.

Belongs to the methyltransferase superfamily. RsmH family.

It localises to the cytoplasm. It carries out the reaction cytidine(1402) in 16S rRNA + S-adenosyl-L-methionine = N(4)-methylcytidine(1402) in 16S rRNA + S-adenosyl-L-homocysteine + H(+). Specifically methylates the N4 position of cytidine in position 1402 (C1402) of 16S rRNA. This Neorickettsia sennetsu (strain ATCC VR-367 / Miyayama) (Ehrlichia sennetsu) protein is Ribosomal RNA small subunit methyltransferase H.